The following is a 511-amino-acid chain: 2,3-bisphosphoglycerate-independent phosphoglycerate mutase (511 aa).

D12 lines the Mn(2+) pocket. Y36 carries the post-translational modification Phosphotyrosine. S62 contacts Mn(2+). S62 (phosphoserine intermediate) is an active-site residue. Substrate-binding positions include H123, 153–154, R185, R191, 261–264, and K336; these read RD and RPDR. Positions 403, 407, 444, 445, and 462 each coordinate Mn(2+).

The protein belongs to the BPG-independent phosphoglycerate mutase family. Monomer. Mn(2+) serves as cofactor.

The catalysed reaction is (2R)-2-phosphoglycerate = (2R)-3-phosphoglycerate. It participates in carbohydrate degradation; glycolysis; pyruvate from D-glyceraldehyde 3-phosphate: step 3/5. Essential for rapid growth and for sporulation. Catalyzes the interconversion of 2-phosphoglycerate and 3-phosphoglycerate. In Bacillus velezensis (strain DSM 23117 / BGSC 10A6 / LMG 26770 / FZB42) (Bacillus amyloliquefaciens subsp. plantarum), this protein is 2,3-bisphosphoglycerate-independent phosphoglycerate mutase.